A 381-amino-acid chain; its full sequence is Cytochrome b (381 aa).

The next 4 membrane-spanning stretches (helical) occupy residues 34–54 (FGSH…FLAM), 78–99 (WLIR…YLHI), 114–134 (WNIG…GYVL), and 179–199 (FFAF…IHLL). 2 residues coordinate heme b: His-84 and His-98. The heme b site is built by His-183 and His-197. Position 202 (His-202) interacts with a ubiquinone. 4 helical membrane passes run 227–247 (YKDL…ALFM), 289–309 (LGGV…PLLH), 321–341 (MTQI…WIGG), and 348–368 (FIMV…IIMP).

This sequence belongs to the cytochrome b family. As to quaternary structure, the cytochrome bc1 complex contains 3 respiratory subunits (MT-CYB, CYC1 and UQCRFS1), 2 core proteins (UQCRC1 and UQCRC2) and probably 6 low-molecular weight proteins. Heme b serves as cofactor.

It localises to the mitochondrion inner membrane. In terms of biological role, component of the ubiquinol-cytochrome c reductase complex (complex III or cytochrome b-c1 complex) that is part of the mitochondrial respiratory chain. The b-c1 complex mediates electron transfer from ubiquinol to cytochrome c. Contributes to the generation of a proton gradient across the mitochondrial membrane that is then used for ATP synthesis. This Carcharhinus porosus (Smalltail shark) protein is Cytochrome b (mt-cyb).